The following is an 83-amino-acid chain: Cytochrome b559 subunit alpha (83 aa).

Residues Val-21–Trp-35 form a helical membrane-spanning segment. His-23 contributes to the heme binding site.

This sequence belongs to the PsbE/PsbF family. As to quaternary structure, heterodimer of an alpha subunit and a beta subunit. PSII is composed of 1 copy each of membrane proteins PsbA, PsbB, PsbC, PsbD, PsbE, PsbF, PsbH, PsbI, PsbJ, PsbK, PsbL, PsbM, PsbT, PsbX, PsbY, PsbZ, Psb30/Ycf12, at least 3 peripheral proteins of the oxygen-evolving complex and a large number of cofactors. It forms dimeric complexes. The cofactor is heme b.

It localises to the plastid. The protein localises to the chloroplast thylakoid membrane. Its function is as follows. This b-type cytochrome is tightly associated with the reaction center of photosystem II (PSII). PSII is a light-driven water:plastoquinone oxidoreductase that uses light energy to abstract electrons from H(2)O, generating O(2) and a proton gradient subsequently used for ATP formation. It consists of a core antenna complex that captures photons, and an electron transfer chain that converts photonic excitation into a charge separation. This is Cytochrome b559 subunit alpha from Liriodendron tulipifera (Tuliptree).